The following is a 41-amino-acid chain: Large ribosomal subunit protein bL36 (41 aa).

The protein belongs to the bacterial ribosomal protein bL36 family.

This chain is Large ribosomal subunit protein bL36, found in Maricaulis maris (strain MCS10) (Caulobacter maris).